The following is a 397-amino-acid chain: Carbamoyl phosphate synthase small chain (397 aa).

Positions 1 to 204 are CPSase; sequence MKHVLRKEKT…NAKLKEKIWH (204 aa). Positions 57, 252, and 254 each coordinate L-glutamine. One can recognise a Glutamine amidotransferase type-1 domain in the interval 204 to 391; sequence HVVVYDFGVK…IKLMKKSYNS (188 aa). The active-site Nucleophile is cysteine 280. L-glutamine-binding residues include leucine 281, glutamine 284, asparagine 322, and tyrosine 325. Catalysis depends on residues histidine 364 and glutamate 366.

It belongs to the CarA family. In terms of assembly, composed of two chains; the small (or glutamine) chain promotes the hydrolysis of glutamine to ammonia, which is used by the large (or ammonia) chain to synthesize carbamoyl phosphate. Tetramer of heterodimers (alpha,beta)4.

The enzyme catalyses hydrogencarbonate + L-glutamine + 2 ATP + H2O = carbamoyl phosphate + L-glutamate + 2 ADP + phosphate + 2 H(+). It catalyses the reaction L-glutamine + H2O = L-glutamate + NH4(+). It functions in the pathway amino-acid biosynthesis; L-arginine biosynthesis; carbamoyl phosphate from bicarbonate: step 1/1. It participates in pyrimidine metabolism; UMP biosynthesis via de novo pathway; (S)-dihydroorotate from bicarbonate: step 1/3. Small subunit of the glutamine-dependent carbamoyl phosphate synthetase (CPSase). CPSase catalyzes the formation of carbamoyl phosphate from the ammonia moiety of glutamine, carbonate, and phosphate donated by ATP, constituting the first step of 2 biosynthetic pathways, one leading to arginine and/or urea and the other to pyrimidine nucleotides. The small subunit (glutamine amidotransferase) binds and cleaves glutamine to supply the large subunit with the substrate ammonia. The protein is Carbamoyl phosphate synthase small chain of Buchnera aphidicola subsp. Baizongia pistaciae (strain Bp).